The chain runs to 573 residues: DNA ligase (573 aa).

An ATP-binding site is contributed by glutamate 250. Lysine 252 serves as the catalytic N6-AMP-lysine intermediate. Residues arginine 257, arginine 272, glutamate 301, phenylalanine 342, arginine 432, and lysine 438 each contribute to the ATP site.

Belongs to the ATP-dependent DNA ligase family. Mg(2+) serves as cofactor.

The catalysed reaction is ATP + (deoxyribonucleotide)n-3'-hydroxyl + 5'-phospho-(deoxyribonucleotide)m = (deoxyribonucleotide)n+m + AMP + diphosphate.. Functionally, DNA ligase that seals nicks in double-stranded DNA during DNA replication, DNA recombination and DNA repair. In Methanococcus maripaludis (strain DSM 14266 / JCM 13030 / NBRC 101832 / S2 / LL), this protein is DNA ligase.